We begin with the raw amino-acid sequence, 351 residues long: Nicotinate-nucleotide--dimethylbenzimidazole phosphoribosyltransferase (351 aa).

Residue Glu317 is the Proton acceptor of the active site.

The protein belongs to the CobT family.

The catalysed reaction is 5,6-dimethylbenzimidazole + nicotinate beta-D-ribonucleotide = alpha-ribazole 5'-phosphate + nicotinate + H(+). Its pathway is nucleoside biosynthesis; alpha-ribazole biosynthesis; alpha-ribazole from 5,6-dimethylbenzimidazole: step 1/2. In terms of biological role, catalyzes the synthesis of alpha-ribazole-5'-phosphate from nicotinate mononucleotide (NAMN) and 5,6-dimethylbenzimidazole (DMB). The chain is Nicotinate-nucleotide--dimethylbenzimidazole phosphoribosyltransferase from Pseudomonas aeruginosa (strain ATCC 15692 / DSM 22644 / CIP 104116 / JCM 14847 / LMG 12228 / 1C / PRS 101 / PAO1).